A 373-amino-acid chain; its full sequence is Erythronate-4-phosphate dehydrogenase (373 aa).

Positions 45 and 67 each coordinate substrate. NAD(+) contacts are provided by residues Asp147, 206 to 208 (ASR), and Asp232. Arg208 is an active-site residue. The active site involves Glu237. His254 functions as the Proton donor in the catalytic mechanism. Gly257 contacts NAD(+). Tyr258 contributes to the substrate binding site.

This sequence belongs to the D-isomer specific 2-hydroxyacid dehydrogenase family. PdxB subfamily. Homodimer.

The protein resides in the cytoplasm. The catalysed reaction is 4-phospho-D-erythronate + NAD(+) = (R)-3-hydroxy-2-oxo-4-phosphooxybutanoate + NADH + H(+). It participates in cofactor biosynthesis; pyridoxine 5'-phosphate biosynthesis; pyridoxine 5'-phosphate from D-erythrose 4-phosphate: step 2/5. Catalyzes the oxidation of erythronate-4-phosphate to 3-hydroxy-2-oxo-4-phosphonooxybutanoate. This is Erythronate-4-phosphate dehydrogenase from Tolumonas auensis (strain DSM 9187 / NBRC 110442 / TA 4).